A 541-amino-acid chain; its full sequence is Light-independent protochlorophyllide reductase subunit B (541 aa).

Residue Asp-36 coordinates [4Fe-4S] cluster. The active-site Proton donor is the Asp-286. Position 421-422 (421-422 (GM)) interacts with substrate.

It belongs to the ChlB/BchB/BchZ family. As to quaternary structure, protochlorophyllide reductase is composed of three subunits; BchL, BchN and BchB. Forms a heterotetramer of two BchB and two BchN subunits. [4Fe-4S] cluster serves as cofactor.

The catalysed reaction is chlorophyllide a + oxidized 2[4Fe-4S]-[ferredoxin] + 2 ADP + 2 phosphate = protochlorophyllide a + reduced 2[4Fe-4S]-[ferredoxin] + 2 ATP + 2 H2O. Its pathway is porphyrin-containing compound metabolism; bacteriochlorophyll biosynthesis (light-independent). Its function is as follows. Component of the dark-operative protochlorophyllide reductase (DPOR) that uses Mg-ATP and reduced ferredoxin to reduce ring D of protochlorophyllide (Pchlide) to form chlorophyllide a (Chlide). This reaction is light-independent. The NB-protein (BchN-BchB) is the catalytic component of the complex. This chain is Light-independent protochlorophyllide reductase subunit B, found in Chloroflexus aurantiacus (strain ATCC 29364 / DSM 637 / Y-400-fl).